The chain runs to 202 residues: Protein Thf1 (202 aa).

The stretch at 174–202 (IYKSSILKMEQAKELLQEAKIKDKKEKKK) forms a coiled coil.

Belongs to the THF1 family.

Its function is as follows. May be involved in photosynthetic membrane biogenesis. The chain is Protein Thf1 from Prochlorococcus marinus subsp. pastoris (strain CCMP1986 / NIES-2087 / MED4).